Consider the following 128-residue polypeptide: Small ribosomal subunit protein eS8 (128 aa).

Residues 1–31 (MAWYQGNDLRKPTGGKKTRHRKKRKHELGRP) form a disordered region. The segment covering 13–27 (TGGKKTRHRKKRKHE) has biased composition (basic residues).

This sequence belongs to the eukaryotic ribosomal protein eS8 family. Part of the 30S ribosomal subunit.

The chain is Small ribosomal subunit protein eS8 from Staphylothermus marinus (strain ATCC 43588 / DSM 3639 / JCM 9404 / F1).